The primary structure comprises 302 residues: Sulfate adenylyltransferase subunit 2 (302 aa).

It belongs to the PAPS reductase family. CysD subfamily. Heterodimer composed of CysD, the smaller subunit, and CysN.

It catalyses the reaction sulfate + ATP + H(+) = adenosine 5'-phosphosulfate + diphosphate. It participates in sulfur metabolism; hydrogen sulfide biosynthesis; sulfite from sulfate: step 1/3. Its function is as follows. With CysN forms the ATP sulfurylase (ATPS) that catalyzes the adenylation of sulfate producing adenosine 5'-phosphosulfate (APS) and diphosphate, the first enzymatic step in sulfur assimilation pathway. APS synthesis involves the formation of a high-energy phosphoric-sulfuric acid anhydride bond driven by GTP hydrolysis by CysN coupled to ATP hydrolysis by CysD. This is Sulfate adenylyltransferase subunit 2 from Escherichia coli O157:H7 (strain EC4115 / EHEC).